Consider the following 647-residue polypeptide: Threonine--tRNA ligase (647 aa).

The region spanning 1–61 (MIKITFPDGA…EEDGSIEIVT (61 aa)) is the TGS domain. The tract at residues 240–538 (DHRKLGKELD…LIETYKGAFP (299 aa)) is catalytic. Zn(2+) contacts are provided by C334, H385, and H515.

It belongs to the class-II aminoacyl-tRNA synthetase family. Homodimer. Requires Zn(2+) as cofactor.

It is found in the cytoplasm. It catalyses the reaction tRNA(Thr) + L-threonine + ATP = L-threonyl-tRNA(Thr) + AMP + diphosphate + H(+). Functionally, catalyzes the attachment of threonine to tRNA(Thr) in a two-step reaction: L-threonine is first activated by ATP to form Thr-AMP and then transferred to the acceptor end of tRNA(Thr). Also edits incorrectly charged L-seryl-tRNA(Thr). This is Threonine--tRNA ligase from Streptococcus pyogenes serotype M1.